The primary structure comprises 352 residues: Histidinol-phosphate aminotransferase (352 aa).

An N6-(pyridoxal phosphate)lysine modification is found at Lys-211.

It belongs to the class-II pyridoxal-phosphate-dependent aminotransferase family. Histidinol-phosphate aminotransferase subfamily. In terms of assembly, homodimer. Pyridoxal 5'-phosphate is required as a cofactor.

The enzyme catalyses L-histidinol phosphate + 2-oxoglutarate = 3-(imidazol-4-yl)-2-oxopropyl phosphate + L-glutamate. It participates in amino-acid biosynthesis; L-histidine biosynthesis; L-histidine from 5-phospho-alpha-D-ribose 1-diphosphate: step 7/9. This is Histidinol-phosphate aminotransferase from Haemophilus influenzae (strain PittEE).